Here is a 368-residue protein sequence, read N- to C-terminus: WAT1-related protein At5g40240 (368 aa).

Helical transmembrane passes span 18 to 38 (VVPF…NTLF), 50 to 70 (VFVF…SVIF), 82 to 102 (PLFF…IAGC), 111 to 131 (TLAS…AVIF), 142 to 162 (ATQA…VVVL), 194 to 214 (WIIG…WYIL), 226 to 246 (ITVV…VCLF), 260 to 280 (ISLA…ALTH), 292 to 312 (ISLF…IFLG), and 315 to 335 (LHLG…TVIW). EamA domains lie at 33 to 161 (GSNT…LVVV) and 208 to 334 (ISVW…YTVI).

It belongs to the drug/metabolite transporter (DMT) superfamily. Plant drug/metabolite exporter (P-DME) (TC 2.A.7.4) family.

The protein localises to the membrane. The sequence is that of WAT1-related protein At5g40240 from Arabidopsis thaliana (Mouse-ear cress).